The sequence spans 118 residues: NADPH-dependent 7-cyano-7-deazaguanine reductase (118 aa).

The Thioimide intermediate role is filled by C31. D38 (proton donor) is an active-site residue. Substrate contacts are provided by residues 53–55 and 72–73; these read IEL and YE.

It belongs to the GTP cyclohydrolase I family. QueF type 1 subfamily.

The protein localises to the cytoplasm. The catalysed reaction is 7-aminomethyl-7-carbaguanine + 2 NADP(+) = 7-cyano-7-deazaguanine + 2 NADPH + 3 H(+). Its pathway is tRNA modification; tRNA-queuosine biosynthesis. Catalyzes the NADPH-dependent reduction of 7-cyano-7-deazaguanine (preQ0) to 7-aminomethyl-7-deazaguanine (preQ1). The chain is NADPH-dependent 7-cyano-7-deazaguanine reductase from Prosthecochloris aestuarii (strain DSM 271 / SK 413).